Here is a 102-residue protein sequence, read N- to C-terminus: Co-chaperonin GroES (102 aa).

The protein belongs to the GroES chaperonin family. As to quaternary structure, heptamer of 7 subunits arranged in a ring. Interacts with the chaperonin GroEL.

The protein resides in the cytoplasm. Its function is as follows. Together with the chaperonin GroEL, plays an essential role in assisting protein folding. The GroEL-GroES system forms a nano-cage that allows encapsulation of the non-native substrate proteins and provides a physical environment optimized to promote and accelerate protein folding. GroES binds to the apical surface of the GroEL ring, thereby capping the opening of the GroEL channel. In Vibrio harveyi (Beneckea harveyi), this protein is Co-chaperonin GroES.